The chain runs to 228 residues: Small ribosomal subunit protein uS3 (228 aa).

Residues 39–107 (VREYLQDKLK…PVHINIEEIR (69 aa)) enclose the KH type-2 domain.

Belongs to the universal ribosomal protein uS3 family. Part of the 30S ribosomal subunit. Forms a tight complex with proteins S10 and S14.

Functionally, binds the lower part of the 30S subunit head. Binds mRNA in the 70S ribosome, positioning it for translation. The polypeptide is Small ribosomal subunit protein uS3 (Pseudomonas fluorescens (strain ATCC BAA-477 / NRRL B-23932 / Pf-5)).